The sequence spans 380 residues: uncharacterized protein (380 aa).

The first 28 residues, 1 to 28, serve as a signal peptide directing secretion; sequence MQFLSDTQRMVLSRAVCASFFFFHVAVA. One can recognise an SPOR domain in the interval 307–380; that stretch reads AGDEKPRGYQ…DAGYETFPLF (74 aa).

This is an uncharacterized protein from Treponema pallidum (strain Nichols).